The primary structure comprises 600 residues: MRVSRLMLVTLRDAPADAEIISHQLLIRGGFIKRITSGIYAYLPLMWRVIQKINCIIREELNAKGCLEALLPQLHPSDLWKKTGRWEGYTAGEGIMFNLKDRQGRELGLGPTHEEIITQIAGESLHSYKQLPVNLYQIQTKFRDEIRPRFGLMRSREFIMKDAYSFHANEEDLKTSYASMDDAYRKIFERCGIKTVAVEADSGAIGGAASQEFMVTADAGEDLILISKDGKYAANQEKAISIPKAAIPLEKNAPILIETKNQNSINELCLNQNFQADQIIKVIVMLAILENGREQPVLISIRGDQELNETKLSNEISKFLNKNLIALKSITEDDLDRQGLINIPFGSIGPDLEDVMLSNASSWNKKFVRFADKTAAELELFVCGANKTEQHRAFSSWSDVGGLPKVVDIRKAKPGDQCFYDNKQFLIEKRGIEVGHIFQLGRKYSSSLEANFTNEKGSSEPFWMGCYGIGVSRIAQAAVEQSHDQSGIIWPLSISPFEVIIVIANIKDEVQNRLGEDIYKQLRHKGIDVLLDDRDERAGVKFKDADLIGIPWRVVVGRDSSSGKVELLKRSDRSVKLIESEIVVKELIAEISRKKSSISY.

Belongs to the class-II aminoacyl-tRNA synthetase family. ProS type 1 subfamily. Homodimer.

It is found in the cytoplasm. The catalysed reaction is tRNA(Pro) + L-proline + ATP = L-prolyl-tRNA(Pro) + AMP + diphosphate. In terms of biological role, catalyzes the attachment of proline to tRNA(Pro) in a two-step reaction: proline is first activated by ATP to form Pro-AMP and then transferred to the acceptor end of tRNA(Pro). As ProRS can inadvertently accommodate and process non-cognate amino acids such as alanine and cysteine, to avoid such errors it has two additional distinct editing activities against alanine. One activity is designated as 'pretransfer' editing and involves the tRNA(Pro)-independent hydrolysis of activated Ala-AMP. The other activity is designated 'posttransfer' editing and involves deacylation of mischarged Ala-tRNA(Pro). The misacylated Cys-tRNA(Pro) is not edited by ProRS. This Prochlorococcus marinus (strain MIT 9211) protein is Proline--tRNA ligase.